The sequence spans 228 residues: Translin (228 aa).

Residues 86–90 (RFHEH) are DNA/RNA binding. Positions 177 to 198 (LDSGFRLLNLKNDSLRKRYDGL) are leucine-zipper. Lys-187 bears the N6-acetyllysine mark. Ser-190 bears the Phosphoserine mark. The residue at position 199 (Lys-199) is an N6-acetyllysine.

It belongs to the translin family. Ring-shaped heterooctamer of six TSN and two TSNAX subunits, DNA/RNA binding occurs inside the ring.

Its subcellular location is the cytoplasm. The protein localises to the nucleus. In terms of biological role, DNA-binding protein that specifically recognizes consensus sequences at the breakpoint junctions in chromosomal translocations, mostly involving immunoglobulin (Ig)/T-cell receptor gene segments. Seems to recognize single-stranded DNA ends generated by staggered breaks occurring at recombination hot spots. Functionally, exhibits both single-stranded and double-stranded endoribonuclease activity. May act as an activator of RNA-induced silencing complex (RISC) by facilitating endonucleolytic cleavage of the siRNA passenger strand. This is Translin (TSN) from Pongo abelii (Sumatran orangutan).